The chain runs to 282 residues: ATP phosphoribosyltransferase (282 aa).

It belongs to the ATP phosphoribosyltransferase family. Long subfamily. Mg(2+) is required as a cofactor.

The protein localises to the cytoplasm. It carries out the reaction 1-(5-phospho-beta-D-ribosyl)-ATP + diphosphate = 5-phospho-alpha-D-ribose 1-diphosphate + ATP. It functions in the pathway amino-acid biosynthesis; L-histidine biosynthesis; L-histidine from 5-phospho-alpha-D-ribose 1-diphosphate: step 1/9. Its activity is regulated as follows. Feedback inhibited by histidine. In terms of biological role, catalyzes the condensation of ATP and 5-phosphoribose 1-diphosphate to form N'-(5'-phosphoribosyl)-ATP (PR-ATP). Has a crucial role in the pathway because the rate of histidine biosynthesis seems to be controlled primarily by regulation of HisG enzymatic activity. The chain is ATP phosphoribosyltransferase from Pyrobaculum aerophilum (strain ATCC 51768 / DSM 7523 / JCM 9630 / CIP 104966 / NBRC 100827 / IM2).